Consider the following 390-residue polypeptide: Sorting nexin C1711.11 (390 aa).

Residues 1-123 (MLKCTIKNEQ…QFLENNSWKS (123 aa)) form the PX domain. A 1,2-diacyl-sn-glycero-3-phospho-(1D-myo-inositol-3-phosphate) is bound by residues arginine 44, lysine 70, and arginine 89.

Belongs to the sorting nexin family.

Its subcellular location is the cytoplasm. The protein resides in the membrane. The sequence is that of Sorting nexin C1711.11 from Schizosaccharomyces pombe (strain 972 / ATCC 24843) (Fission yeast).